Consider the following 382-residue polypeptide: Norsolorinic acid reductase B (382 aa).

Asp-64 lines the NADP(+) pocket. The Proton donor role is filled by Tyr-69. A substrate-binding site is contributed by His-143. NADP(+) contacts are provided by residues Ser-173 to Asp-174, Gln-199, Gly-228 to Glu-238, and Arg-302 to Val-310.

It belongs to the aldo/keto reductase family. Aldo/keto reductase 2 subfamily.

The protein operates within mycotoxin biosynthesis; aflatoxin biosynthesis. Its function is as follows. Norsolorinic acid reductase; part of the gene cluster that mediates the biosynthesis of aflatoxins, a group of polyketide-derived furanocoumarins, and part of the most toxic and carcinogenic compounds among the known mycotoxins. The four major aflatoxins produced by A.parasiticus are aflatoxin B1 (AFB1), aflatoxin B2 (AFB2), aflatoxin G1 (AFG1) and aflatoxin G2 (AFG2). Within the aflatoxin pathway, the norsolorinic acid reductase aflE may play a role in the conversion of norsolorinic acid (NOR) to averantin (AVN). The biosynthesis of aflatoxins begins with the norsolorinic acid synthase aflC that combines a hexanoyl starter unit produced by the fatty acid synthase aflA/aflB and 7 malonyl-CoA extender units to synthesize the precursor NOR. The second step is the conversion of NOR to averantin and requires the norsolorinic acid ketoreductase aflD, which catalyzes the dehydration of norsolorinic acid to form (1'S)-averantin. The norsolorinic acid reductases aflE and aflF may also play a role in the conversion of NOR to AVN. The cytochrome P450 monooxygenase aflG then catalyzes the hydroxylation of AVN to 5'hydroxyaverantin (HAVN). The next step is performed by the 5'-hydroxyaverantin dehydrogenase aflH that transforms HAVN to 5'-oxoaverantin (OAVN) which is further converted to averufin (AVF) by aflK that plays a dual role in the pathway, as a 5'-oxoaverantin cyclase that mediates conversion of 5'-oxoaverantin, as well as a versicolorin B synthase in a later step in the pathway. The averufin oxidase aflI catalyzes the conversion of AVF to versiconal hemiacetal acetate (VHA). VHA is then the substrate for the versiconal hemiacetal acetate esterase aflJ to yield versiconal (VAL). Versicolorin B synthase aflK then converts VAL to versicolorin B (VERB) by closing the bisfuran ring of aflatoxin which is required for DNA-binding, thus giving to aflatoxin its activity as a mutagen. Then, the activity of the versicolorin B desaturase aflL leads to versicolorin A (VERA). A branch point starts from VERB since it can also be converted to dihydrodemethylsterigmatocystin (DMDHST), probably also by aflL, VERA being a precursor for aflatoxins B1 and G1, and DMDHST for aflatoxins B2 and G2. Next, the versicolorin reductase aflM and the cytochrome P450 monooxygenase aflN are involved in conversion of VERA to demethylsterigmatocystin (DMST). AflX and aflY seem also involved in this step, through probable aflX-mediated epoxide ring-opening step following versicolorin A oxidation and aflY-mediated Baeyer-Villiger oxidation required for the formation of the xanthone ring. The methyltransferase aflO then leads to the modification of DMST to sterigmatocystin (ST), and of DMDHST to dihydrosterigmatocystin (DHST). Both ST and DHST are then substrates of the O-methyltransferase aflP to yield O-methylsterigmatocystin (OMST) and dihydro-O-methylsterigmatocystin (DHOMST), respectively. Finally OMST is converted to aflatoxins B1 and G1, and DHOMST to aflatoxins B2 and G2, via the action of several enzymes including O-methylsterigmatocystin oxidoreductase aflQ, the cytochrome P450 monooxygenase aflU, but also the NADH-dependent flavin oxidoreductase nadA which is specifically required for the synthesis of AFG1. The chain is Norsolorinic acid reductase B from Aspergillus parasiticus (strain ATCC 56775 / NRRL 5862 / SRRC 143 / SU-1).